The sequence spans 200 residues: 3-isopropylmalate dehydratase small subunit (200 aa).

The protein belongs to the LeuD family. LeuD type 1 subfamily. As to quaternary structure, heterodimer of LeuC and LeuD.

It carries out the reaction (2R,3S)-3-isopropylmalate = (2S)-2-isopropylmalate. It participates in amino-acid biosynthesis; L-leucine biosynthesis; L-leucine from 3-methyl-2-oxobutanoate: step 2/4. Functionally, catalyzes the isomerization between 2-isopropylmalate and 3-isopropylmalate, via the formation of 2-isopropylmaleate. This chain is 3-isopropylmalate dehydratase small subunit, found in Pectobacterium atrosepticum (strain SCRI 1043 / ATCC BAA-672) (Erwinia carotovora subsp. atroseptica).